Here is an 88-residue protein sequence, read N- to C-terminus: DNA-directed RNA polymerase subunit omega (88 aa).

Belongs to the RNA polymerase subunit omega family. As to quaternary structure, the RNAP catalytic core consists of 2 alpha, 1 beta, 1 beta' and 1 omega subunit. When a sigma factor is associated with the core the holoenzyme is formed, which can initiate transcription.

It carries out the reaction RNA(n) + a ribonucleoside 5'-triphosphate = RNA(n+1) + diphosphate. In terms of biological role, promotes RNA polymerase assembly. Latches the N- and C-terminal regions of the beta' subunit thereby facilitating its interaction with the beta and alpha subunits. This is DNA-directed RNA polymerase subunit omega from Pseudomonas aeruginosa (strain LESB58).